The following is a 118-amino-acid chain: Thioredoxin H3 (118 aa).

Ala-2 is subject to N-acetylalanine. Residues 2-113 (AAEGEVIACH…IIANLEKHKT (112 aa)) form the Thioredoxin domain. Residues Cys-39 and Cys-42 each act as nucleophile in the active site. Cys-39 and Cys-42 form a disulfide bridge.

Belongs to the thioredoxin family. Plant H-type subfamily. In terms of assembly, interacts with FBA5 and FBA8. Interacts with FBA6. Interacts with MDH1.

The protein localises to the cytoplasm. In terms of biological role, thiol-disulfide oxidoreductase that possesses disulfide reductase and insulin disulfide bonds reducing activities. Heat shock causes oligomerization and formation of high molecular weight (HMW) complexes with concomitant functional switching from a disulfide reductase to chaperone. The chain is Thioredoxin H3 (TRX3) from Arabidopsis thaliana (Mouse-ear cress).